We begin with the raw amino-acid sequence, 223 residues long: DNA mismatch repair protein MutH (223 aa).

This sequence belongs to the MutH family.

The protein localises to the cytoplasm. Functionally, sequence-specific endonuclease that cleaves unmethylated GATC sequences. It is involved in DNA mismatch repair. The chain is DNA mismatch repair protein MutH from Shewanella sp. (strain MR-4).